We begin with the raw amino-acid sequence, 663 residues long: Transcriptional repressor CTCFL (663 aa).

Residues Glu24 to Arg51 show a composition bias toward basic and acidic residues. Disordered stretches follow at residues Glu24 to Ala55 and Asn221 to Thr250. 10 consecutive C2H2-type zinc fingers follow at residues Phe257–His279, His285–His307, Tyr313–His336, Phe342–His364, Phe370–His392, Tyr398–His421, Tyr428–His451, Leu458–His480, Phe486–His508, and Phe514–His537. A C2H2-type 11; atypical zinc finger spans residues Tyr546–Cys568. The tract at residues Gly569–Gly630 is disordered. Over residues Lys580–Thr590 the composition is skewed to basic residues. Positions Glu594 to Lys607 are enriched in basic and acidic residues. Positions Glu608 to Ala620 are enriched in low complexity.

This sequence belongs to the CTCF zinc-finger protein family. As to quaternary structure, interacts with histones, PRMT7 and SETD1A. Interacts (via N-terminus) with BAG6/BAT3. In terms of tissue distribution, testis specific. Specifically expressed in primary spermatocytes.

It is found in the cytoplasm. The protein resides in the nucleus. Testis-specific DNA binding protein responsible for insulator function, nuclear architecture and transcriptional control, which probably acts by recruiting epigenetic chromatin modifiers. Plays a key role in gene imprinting in male germline, by participating in the establishment of differential methylation at the IGF2/H19 imprinted control region (ICR). Directly binds the unmethylated H19 ICR and recruits the PRMT7 methyltransferase, leading to methylate histone H4 'Arg-3' to form H4R3sme2. This probably leads to recruit de novo DNA methyltransferases at these sites. Seems to act as tumor suppressor. In association with DNMT1 and DNMT3B, involved in activation of BAG1 gene expression by binding to its promoter. Required for dimethylation of H3 lysine 4 (H3K4me2) of MYC and BRCA1 promoters. This is Transcriptional repressor CTCFL (CTCFL) from Homo sapiens (Human).